A 346-amino-acid polypeptide reads, in one-letter code: Protein MelA (346 aa).

VOC domains lie at 12–141 (GIEF…DFEA) and 155–305 (EVDH…IFTK). Residues His-158, His-237, and Glu-314 each contribute to the Fe cation site.

Belongs to the 4HPPD family. Fe cation is required as a cofactor.

The protein resides in the cytoplasm. Its pathway is pigment biosynthesis; melanin biosynthesis. The polypeptide is Protein MelA (melA) (Shewanella colwelliana (Alteromonas colwelliana)).